The sequence spans 577 residues: Polyadenylate-binding protein, cytoplasmic and nuclear (577 aa).

Residues 1–10 (MADITDKTAE) show a composition bias toward basic and acidic residues. The interval 1-36 (MADITDKTAEQLENLNIQDDQKQAATGSESQSVENS) is disordered. Residue alanine 2 is modified to N-acetylalanine. Residue lysine 7 forms a Glycyl lysine isopeptide (Lys-Gly) (interchain with G-Cter in ubiquitin) linkage. The required and sufficient for nuclear export stretch occupies residues 9-61 (AEQLENLNIQDDQKQAATGSESQSVENSSASLYVGDLEPSVSEAHLYDIFSPI). Over residues 11-27 (QLENLNIQDDQKQAATG) the composition is skewed to polar residues. The Nuclear export signal signature appears at 12–17 (LENLNI). 4 RRM domains span residues 38 to 116 (ASLY…WSQR), 126 to 203 (GNIF…PHLS), 219 to 296 (TNLY…RAQK), and 322 to 399 (VNLF…IAQR). Omega-N-methylarginine is present on arginine 107. Position 249 is a phosphoserine (serine 249). Positions 281 to 317 (DSELNGEKLYVGRAQKKNERMHVLKKQYEAYRLEKMA) are required and sufficient for nuclear import. Serine 332 bears the Phosphoserine mark. Lysine 337 is covalently cross-linked (Glycyl lysine isopeptide (Lys-Gly) (interchain with G-Cter in ubiquitin)). Serine 405 bears the Phosphoserine mark. Residues 473–577 (PPQFRNGPVY…KEQEQQTEQA (105 aa)) are interaction with SUP35. Residues 489–568 (GFPRNANDNN…ASAAYESFKK (80 aa)) enclose the PABC domain.

This sequence belongs to the polyadenylate-binding protein type-1 family. As to quaternary structure, binds to poly(A) mRNA to form a periodic structure with a packing density of one molecule per 25 adenylate residues. Interacts with the nuclear export factor CRM1 and with the importin SXM1. Interacts with RNA15, a component of the cleavage factor IA (CFIA) complex. Interacts with translation initiation factor eIF4G (TIF4631 or TIF4632) and release factor eRF3 (SUP35). Interacts with the PAB-dependent poly(A)-nuclease (PAN) complex regulatory subunit PAN3. Interacts with ARF1, DCP1, PBP1, the Hsp70 chaperone SSA1, and TPA1. Interacts with PAT1 in an RNA-dependent manner.

The protein localises to the cytoplasm. It localises to the nucleus. Its function is as follows. Binds the poly(A) tail of mRNA. Appears to be an important mediator of the multiple roles of the poly(A) tail in mRNA biogenesis, stability and translation. In the nucleus, interacts with the nuclear cleavage factor IA (CFIA), which is required for both mRNA cleavage and polyadenylation. Is also required for efficient mRNA export to the cytoplasm. Acts in concert with a poly(A)-specific nuclease (PAN) to affect poly(A) tail shortening, which may occur concomitantly with either nucleocytoplasmic mRNA transport or translational initiation. Regulates PAN activity via interaction with the stimulator PAN3 or the inhibitor PBP1. In the cytoplasm, affects both translation and mRNA decay. Stimulates translation by interaction with translation initiation factor eIF4G, a subunit of the cap-binding complex eIF4F, bringing the 5'- and 3'-ends of the mRNA in proximity. The formation of this circular mRNP structure appears to be critical for the synergistic effects of the cap and the poly(A) tail in facilitating translation initiation, recycling of ribosomes, and mRNA stability. Also regulates translation termination by recruiting eukaryotic release factor 3 (eRF3). Interaction with eRF3 is also required for regulation of normal mRNA decay through translation termination-coupled poly(A) shortening, probably mediated by PAN. Loss of PAB1 from the mRNP after deadenylation triggers mRNA degradation. Inhibits the major cytoplasmic mRNA deadenylase CCR4-NOT complex. Is also associated peripherally with COPI vesicles through its interaction with ARF1, and this is required for correct localization of the asymmetrically distributed ASH1 mRNA. The chain is Polyadenylate-binding protein, cytoplasmic and nuclear (PAB1) from Saccharomyces cerevisiae (strain ATCC 204508 / S288c) (Baker's yeast).